Consider the following 272-residue polypeptide: MICMSRKPSPTRRTRIHRFHKGSCGRKLVGLTCYDFSTARVLSDCELDFLLVGDSASGVIYGYENTGSVCLDEIIYLAAGVVRGAPNSFIIVDLPFGTYEKSDELAVETAIEVIKRTGASAVKLEGGARMACRISAIVRAGVPVMGHIGFTPQTINALGGYKIQGRDNADLIYLDAQAVEQAGAFAVVMEMVTEDLAKTITSEIKITTIGVGAGRYTDGQLLVINDLIGLSEKKITFAPRYASIDNTVASCVKLWRKDVLEGNFPQKDHIPA.

The Mg(2+) site is built by Asp-54 and Asp-93. 3-methyl-2-oxobutanoate is bound by residues 54 to 55 (DS), Asp-93, and Lys-123. Glu-125 lines the Mg(2+) pocket. The Proton acceptor role is filled by Glu-190.

The protein belongs to the PanB family. In terms of assembly, homodecamer; pentamer of dimers. Requires Mg(2+) as cofactor.

It localises to the cytoplasm. It catalyses the reaction 3-methyl-2-oxobutanoate + (6R)-5,10-methylene-5,6,7,8-tetrahydrofolate + H2O = 2-dehydropantoate + (6S)-5,6,7,8-tetrahydrofolate. Its pathway is cofactor biosynthesis; (R)-pantothenate biosynthesis; (R)-pantoate from 3-methyl-2-oxobutanoate: step 1/2. In terms of biological role, catalyzes the reversible reaction in which hydroxymethyl group from 5,10-methylenetetrahydrofolate is transferred onto alpha-ketoisovalerate to form ketopantoate. This is 3-methyl-2-oxobutanoate hydroxymethyltransferase from Tropheryma whipplei (strain Twist) (Whipple's bacillus).